Reading from the N-terminus, the 284-residue chain is Phosphatidylserine decarboxylase proenzyme (284 aa).

Active-site charge relay system; for autoendoproteolytic cleavage activity residues include D88, H145, and S248. The Schiff-base intermediate with substrate; via pyruvic acid; for decarboxylase activity role is filled by S248. The residue at position 248 (S248) is a Pyruvic acid (Ser); by autocatalysis.

Belongs to the phosphatidylserine decarboxylase family. PSD-B subfamily. Prokaryotic type I sub-subfamily. In terms of assembly, heterodimer of a large membrane-associated beta subunit and a small pyruvoyl-containing alpha subunit. It depends on pyruvate as a cofactor. Post-translationally, is synthesized initially as an inactive proenzyme. Formation of the active enzyme involves a self-maturation process in which the active site pyruvoyl group is generated from an internal serine residue via an autocatalytic post-translational modification. Two non-identical subunits are generated from the proenzyme in this reaction, and the pyruvate is formed at the N-terminus of the alpha chain, which is derived from the carboxyl end of the proenzyme. The autoendoproteolytic cleavage occurs by a canonical serine protease mechanism, in which the side chain hydroxyl group of the serine supplies its oxygen atom to form the C-terminus of the beta chain, while the remainder of the serine residue undergoes an oxidative deamination to produce ammonia and the pyruvoyl prosthetic group on the alpha chain. During this reaction, the Ser that is part of the protease active site of the proenzyme becomes the pyruvoyl prosthetic group, which constitutes an essential element of the active site of the mature decarboxylase.

The protein resides in the cell membrane. The catalysed reaction is a 1,2-diacyl-sn-glycero-3-phospho-L-serine + H(+) = a 1,2-diacyl-sn-glycero-3-phosphoethanolamine + CO2. Its pathway is phospholipid metabolism; phosphatidylethanolamine biosynthesis; phosphatidylethanolamine from CDP-diacylglycerol: step 2/2. Functionally, catalyzes the formation of phosphatidylethanolamine (PtdEtn) from phosphatidylserine (PtdSer). The polypeptide is Phosphatidylserine decarboxylase proenzyme (Albidiferax ferrireducens (strain ATCC BAA-621 / DSM 15236 / T118) (Rhodoferax ferrireducens)).